The sequence spans 279 residues: Uroplakin-3b (279 aa).

The signal sequence occupies residues Met-1–Thr-26. At Leu-27–Asp-200 the chain is on the lumenal side. An N-linked (GlcNAc...) asparagine glycan is attached at Asn-77. A helical transmembrane segment spans residues Met-201–Ala-221. Residues Ala-222–Pro-279 lie on the Cytoplasmic side of the membrane.

It belongs to the uroplakin-3 family. In terms of assembly, heterodimer with uroplakin-1B (UPK1B). In terms of tissue distribution, expression is urothelium-specific.

The protein resides in the cell membrane. Functionally, component of the asymmetric unit membrane (AUM); a highly specialized biomembrane elaborated by terminally differentiated urothelial cells. May play an important role in AUM-cytoskeleton interaction in terminally differentiated urothelial cells. It also contributes to the formation of urothelial glycocalyx which may play an important role in preventing bacterial adherence. The chain is Uroplakin-3b (UPK3B) from Bos taurus (Bovine).